Consider the following 326-residue polypeptide: tRNA-modifying protein YgfZ (326 aa).

Folate-binding residues include Trp27 and Trp189.

The protein belongs to the tRNA-modifying YgfZ family.

The protein resides in the cytoplasm. Folate-binding protein involved in regulating the level of ATP-DnaA and in the modification of some tRNAs. It is probably a key factor in regulatory networks that act via tRNA modification, such as initiation of chromosomal replication. The sequence is that of tRNA-modifying protein YgfZ from Salmonella arizonae (strain ATCC BAA-731 / CDC346-86 / RSK2980).